Reading from the N-terminus, the 611-residue chain is Lanthanide-dependent methanol dehydrogenase (611 aa).

The signal sequence occupies residues 1–34; sequence MTVKLKKPKKYAVAKNATLLAAFGLIGSLSLAKA. C138 and C139 are disulfide-bonded. 5 residues coordinate pyrroloquinoline quinone: R144, T188, S203, G204, and G205. E206 contacts Ce(3+). E206 provides a ligand contact to Eu(3+). The pyrroloquinoline quinone site is built by T270 and W272. Ce(3+) is bound by residues N290, D333, and D335. Residues N290, D333, and D335 each coordinate Eu(3+). Residue R360 coordinates pyrroloquinoline quinone. The cysteines at positions 414 and 443 are disulfide-linked. W501 and W566 together coordinate pyrroloquinoline quinone.

It belongs to the bacterial PQQ dehydrogenase family. As to quaternary structure, homodimer. It depends on Ce(3+) as a cofactor. The cofactor is La(3+). Nd(3+) serves as cofactor. Pr(3+) is required as a cofactor. Requires Eu(3+) as cofactor. It depends on pyrroloquinoline quinone as a cofactor.

It localises to the periplasm. It carries out the reaction 2 Fe(III)-[cytochrome cL] + methanol = 2 Fe(II)-[cytochrome cL] + formaldehyde + 2 H(+). It catalyses the reaction 4 Fe(III)-[cytochrome cL] + methanol + H2O = 4 Fe(II)-[cytochrome cL] + formate + 5 H(+). The catalysed reaction is 2 Fe(III)-[cytochrome cL] + a primary alcohol = 2 Fe(II)-[cytochrome cL] + an aldehyde + 2 H(+). It participates in one-carbon metabolism; methanol degradation. Functionally, catalyzes the oxidation of methanol to formaldehyde or formate in the presence of lanthanides (Ln). Is a key enzyme in methane/methanol metabolism, allowing M.fumariolicum to grow on methane as the sole carbon and energy source. Can also act on other primary alcohols in vitro, such as ethanol, 1-propanol, 1-butanol, and 1-hexanol, but is not able to oxidize secondary alcohols and acetaldehyde. Uses a specific cytochrome cL, encoded by the adjacent gene in the locus, as electron acceptor. This Methylacidiphilum fumariolicum (strain SolV) protein is Lanthanide-dependent methanol dehydrogenase.